We begin with the raw amino-acid sequence, 58 residues long: Small ribosomal subunit protein bS21 (58 aa).

The disordered stretch occupies residues 37 to 58 (FYEKPSVKRKKKSEAARKRKKF). Residues 43 to 58 (VKRKKKSEAARKRKKF) are compositionally biased toward basic residues.

This sequence belongs to the bacterial ribosomal protein bS21 family.

The polypeptide is Small ribosomal subunit protein bS21 (Enterococcus faecalis (strain ATCC 700802 / V583)).